Here is a 428-residue protein sequence, read N- to C-terminus: Serine--tRNA ligase (428 aa).

235 to 237 (TAE) is a binding site for L-serine. ATP is bound at residue 266 to 268 (RSE). L-serine is bound at residue glutamate 289. ATP is bound at residue 353 to 356 (EISS). Serine 389 contacts L-serine.

This sequence belongs to the class-II aminoacyl-tRNA synthetase family. Type-1 seryl-tRNA synthetase subfamily. As to quaternary structure, homodimer. The tRNA molecule binds across the dimer.

It is found in the cytoplasm. It catalyses the reaction tRNA(Ser) + L-serine + ATP = L-seryl-tRNA(Ser) + AMP + diphosphate + H(+). The enzyme catalyses tRNA(Sec) + L-serine + ATP = L-seryl-tRNA(Sec) + AMP + diphosphate + H(+). It participates in aminoacyl-tRNA biosynthesis; selenocysteinyl-tRNA(Sec) biosynthesis; L-seryl-tRNA(Sec) from L-serine and tRNA(Sec): step 1/1. In terms of biological role, catalyzes the attachment of serine to tRNA(Ser). Is also able to aminoacylate tRNA(Sec) with serine, to form the misacylated tRNA L-seryl-tRNA(Sec), which will be further converted into selenocysteinyl-tRNA(Sec). The sequence is that of Serine--tRNA ligase from Shewanella frigidimarina (strain NCIMB 400).